The sequence spans 188 residues: ATP synthase subunit b (188 aa).

A helical membrane pass occupies residues 7–26; the sequence is TAAAGAMTLFFASMAYASGD.

This sequence belongs to the ATPase B chain family. In terms of assembly, F-type ATPases have 2 components, F(1) - the catalytic core - and F(0) - the membrane proton channel. F(1) has five subunits: alpha(3), beta(3), gamma(1), delta(1), epsilon(1). F(0) has three main subunits: a(1), b(2) and c(10-14). The alpha and beta chains form an alternating ring which encloses part of the gamma chain. F(1) is attached to F(0) by a central stalk formed by the gamma and epsilon chains, while a peripheral stalk is formed by the delta and b chains.

Its subcellular location is the cell inner membrane. F(1)F(0) ATP synthase produces ATP from ADP in the presence of a proton or sodium gradient. F-type ATPases consist of two structural domains, F(1) containing the extramembraneous catalytic core and F(0) containing the membrane proton channel, linked together by a central stalk and a peripheral stalk. During catalysis, ATP synthesis in the catalytic domain of F(1) is coupled via a rotary mechanism of the central stalk subunits to proton translocation. Its function is as follows. Component of the F(0) channel, it forms part of the peripheral stalk, linking F(1) to F(0). The sequence is that of ATP synthase subunit b from Nitratidesulfovibrio vulgaris (strain DP4) (Desulfovibrio vulgaris).